We begin with the raw amino-acid sequence, 431 residues long: D-tagatose-1,6-bisphosphate aldolase subunit KbaZ (431 aa).

Belongs to the GatZ/KbaZ family. KbaZ subfamily. As to quaternary structure, forms a complex with KbaY.

Its pathway is carbohydrate metabolism; D-tagatose 6-phosphate degradation; D-glyceraldehyde 3-phosphate and glycerone phosphate from D-tagatose 6-phosphate: step 2/2. Functionally, component of the tagatose-1,6-bisphosphate aldolase KbaYZ that is required for full activity and stability of the Y subunit. Could have a chaperone-like function for the proper and stable folding of KbaY. When expressed alone, KbaZ does not show any aldolase activity. This Citrobacter koseri (strain ATCC BAA-895 / CDC 4225-83 / SGSC4696) protein is D-tagatose-1,6-bisphosphate aldolase subunit KbaZ.